The sequence spans 102 residues: Large ribosomal subunit protein uL24 (102 aa).

Belongs to the universal ribosomal protein uL24 family. In terms of assembly, part of the 50S ribosomal subunit.

Functionally, one of two assembly initiator proteins, it binds directly to the 5'-end of the 23S rRNA, where it nucleates assembly of the 50S subunit. One of the proteins that surrounds the polypeptide exit tunnel on the outside of the subunit. This Ralstonia pickettii (strain 12J) protein is Large ribosomal subunit protein uL24.